Reading from the N-terminus, the 461-residue chain is Mannose-6-phosphate isomerase (461 aa).

Residues Gln107, His109, Glu134, and His291 each contribute to the Zn(2+) site. Arg310 is a catalytic residue.

This sequence belongs to the mannose-6-phosphate isomerase type 1 family. Zn(2+) is required as a cofactor.

The protein localises to the cytoplasm. The enzyme catalyses D-mannose 6-phosphate = D-fructose 6-phosphate. It participates in nucleotide-sugar biosynthesis; GDP-alpha-D-mannose biosynthesis; alpha-D-mannose 1-phosphate from D-fructose 6-phosphate: step 1/2. In terms of biological role, involved in the synthesis of the GDP-mannose and dolichol-phosphate-mannose required for a number of critical mannosyl transfer reactions. In Emericella nidulans (strain FGSC A4 / ATCC 38163 / CBS 112.46 / NRRL 194 / M139) (Aspergillus nidulans), this protein is Mannose-6-phosphate isomerase (manA).